The following is a 186-amino-acid chain: MARRPVDIPIPASPVQPFPILTEYVDIVAGFGRGSAELGIPTANVPIEQLPSEVNEMATGVYFGWARLRPNMDQEAQVHHRNDGSEVIYNFGSKLSETERGVFPIVLSVGWNPFYNNSKKTVELHILNDFEEDFYGAKIKFSFLGYIRPELNYTTKEALIEDIHTDIKIASEVLHTEPYSSLKNQL.

Mg(2+)-binding residues include Thr42 and Asn44. Residue Glu123 is the Nucleophile of the active site.

Belongs to the flavokinase family. Zn(2+) is required as a cofactor. The cofactor is Mg(2+).

The catalysed reaction is riboflavin + ATP = FMN + ADP + H(+). It participates in cofactor biosynthesis; FMN biosynthesis; FMN from riboflavin (ATP route): step 1/1. Functionally, catalyzes the phosphorylation of riboflavin (vitamin B2) to form flavin mononucleotide (FMN) coenzyme. The protein is Riboflavin kinase (FMN1) of Eremothecium gossypii (strain ATCC 10895 / CBS 109.51 / FGSC 9923 / NRRL Y-1056) (Yeast).